Reading from the N-terminus, the 645-residue chain is MFQDHPLLIQLKQQLYDKELRMVGVVKSTDKGFGFLEVNAQKSYFIPPLFMKKVMHGDKISAVLRIVNNRAIAEPETLIEPFLSRFVGKVQIKNDKLALLPKHPLIKEIIPASQPRSMKNTQLCHGDWVIAEMCHHPLDGYRYFYAKITELITTKDDNFAHWRVTLAHYNLEREAPAMPKYLTIQDNGLIREDLTELNFITIDHASTEDIDDALHVAYGTNGALVLTIAIADPTAWIIAGSQLDCIARDRAFTNYLPGFNIPMLPRMLSEDLCSLRAYEKRPALVCQVTMQHDGTLNEDMRFFAAWIESKAKLSYDEVSDWIENIGFWQPQNNAIAEQIRMLHIVCQARSSWRKQHALVFKDKPDYRFILEENGNVKNIIAEPRRIAKRMIEEAMITANICAARVLRDNLGFGLYNTHNGFDTTLIDQVVAILQKHNISVDATQLLTLEGFCALRRKLNTMSTSYLDSRIRRFQTLSELKTEPGPHFGLGLEVYATWTSPIRKYSDMMNHRLLKALIGAGKAERPKTDITFRMSERRRQNRIAERDVEDWLYASFLKNQVGSHIRYSAEIIDIYRNGMRIRLLDNGAIAFIPALLIHNIRDELICNQDIGIVQIQGKERYRQGDTIEVYIKEVHIDNRSIIAKIV.

An RNB domain is found at 191–517 (REDLTELNFI…MNHRLLKALI (327 aa)). Residues 563–645 (HIRYSAEIID…DNRSIIAKIV (83 aa)) enclose the S1 motif domain.

This sequence belongs to the RNR ribonuclease family. RNase II subfamily.

It localises to the cytoplasm. The enzyme catalyses Exonucleolytic cleavage in the 3'- to 5'-direction to yield nucleoside 5'-phosphates.. In terms of biological role, involved in mRNA degradation. Hydrolyzes single-stranded polyribonucleotides processively in the 3' to 5' direction. This Baumannia cicadellinicola subsp. Homalodisca coagulata protein is Exoribonuclease 2.